A 430-amino-acid polypeptide reads, in one-letter code: N-lysine methyltransferase SMYD2-A (430 aa).

In terms of domain architecture, SET spans 5 to 239 (EGLERFDSPG…AGDEVFTSYI (235 aa)). Position 15–17 (15–17 (KGR)) interacts with S-adenosyl-L-methionine. Zn(2+) contacts are provided by C50, C53, C63, C66, C72, C76, H84, and C88. An MYND-type zinc finger spans residues 50–88 (CDFCFARKEGLSKCGKCKQAFYCNVDCQKGDWPMHKLEC). S-adenosyl-L-methionine-binding positions include H135, 204–205 (NH), and 256–258 (YFF).

Belongs to the class V-like SAM-binding methyltransferase superfamily.

Its subcellular location is the cytoplasm. The protein resides in the cytosol. The protein localises to the nucleus. The catalysed reaction is L-lysyl(4)-[histone H3] + 3 S-adenosyl-L-methionine = N(6),N(6),N(6)-trimethyl-L-lysyl(4)-[histone H3] + 3 S-adenosyl-L-homocysteine + 3 H(+). It catalyses the reaction L-lysyl-[protein] + S-adenosyl-L-methionine = N(6)-methyl-L-lysyl-[protein] + S-adenosyl-L-homocysteine + H(+). Functionally, protein-lysine N-methyltransferase that methylates both histones and non-histone proteins, including p53/TP53 and RB1. Specifically trimethylates histone H3 'Lys-4' (H3K4me3) in vivo. The activity requires interaction with HSP90alpha. Shows even higher methyltransferase activity on p53/TP53. Monomethylates 'Lys-370' of p53/TP53, leading to decreased DNA-binding activity and subsequent transcriptional regulation activity of p53/TP53. Monomethylates RB1 at 'Lys-860'. This chain is N-lysine methyltransferase SMYD2-A (smyd2-a), found in Xenopus laevis (African clawed frog).